The chain runs to 557 residues: MTDNNKYRDVEIRAPRGNKLTAKSWLTEAPLRMLMNNLDPQVAENPKELVVYGGIGRAARNWACYDKIVETLTRLEDDETLLVQSGKPVGVFKTHSNAPRVLIANSNLVPHWANWEHFNELDAKGLAMYGQMTAGSWIYIGSQGIVQGTYETFVEAGRQHYGGSLKGKWVLTAGLGGMGGAQPLAATLAGACSLNIECQQSRIDFRLETRYVDEQAKDLDDALARIAKYTAEGKAISIALHGNAAEVLPELVKRGVRPDMVTDQTSAHDPLNGYLPVGWTWEQYRDRAQTEPAAVVKAAKQSMAVHVQAMLDFQKQGIPTFDYGNNIRQMAKEEGVANAFDFPGFVPAYIRPLFCRGVGPFRWAALSGEAEDIYKTDAKVKELIPDDAHLHRWLDMARERISFQGLPARICWVGLGLRAKLGLAFNEMVRSGELSAPIVIGRDHLDSGSVSSPNRETESMRDGSDAVSDWPLLNALLNTASGATWVSLHHGGGVGMGFSQHSGMVIVCDGTDEAAARIARVLTNDPGTGVMRHADAGYDIAVDCAKEQGLDLPMITG.

NAD(+) contacts are provided by residues 53 to 54, Q131, 177 to 179, E197, R202, 243 to 244, 264 to 268, 274 to 275, and Y323; these read GG, GMG, NA, QTSAH, and YL. C411 is a catalytic residue. Residues 445 to 464 are disordered; that stretch reads LDSGSVSSPNRETESMRDGS. Positions 455–464 are enriched in basic and acidic residues; that stretch reads RETESMRDGS. An NAD(+)-binding site is contributed by G493.

The protein belongs to the urocanase family. NAD(+) serves as cofactor.

It is found in the cytoplasm. The catalysed reaction is 4-imidazolone-5-propanoate = trans-urocanate + H2O. It functions in the pathway amino-acid degradation; L-histidine degradation into L-glutamate; N-formimidoyl-L-glutamate from L-histidine: step 2/3. Catalyzes the conversion of urocanate to 4-imidazolone-5-propionate. This is Urocanate hydratase from Pseudomonas putida (strain W619).